Reading from the N-terminus, the 396-residue chain is 1-deoxy-D-xylulose 5-phosphate reductoisomerase (396 aa).

Positions 15, 16, 17, 18, 41, and 129 each coordinate NADPH. Lys130 serves as a coordination point for 1-deoxy-D-xylulose 5-phosphate. Glu131 serves as a coordination point for NADPH. A Mn(2+)-binding site is contributed by Asp155. Ser156, Glu157, Ser182, and His205 together coordinate 1-deoxy-D-xylulose 5-phosphate. Glu157 is a Mn(2+) binding site. Gly211 is an NADPH binding site. 1-deoxy-D-xylulose 5-phosphate-binding residues include Ser218, Asn223, Lys224, and Glu227. Glu227 serves as a coordination point for Mn(2+).

It belongs to the DXR family. Requires Mg(2+) as cofactor. Mn(2+) is required as a cofactor.

The catalysed reaction is 2-C-methyl-D-erythritol 4-phosphate + NADP(+) = 1-deoxy-D-xylulose 5-phosphate + NADPH + H(+). It participates in isoprenoid biosynthesis; isopentenyl diphosphate biosynthesis via DXP pathway; isopentenyl diphosphate from 1-deoxy-D-xylulose 5-phosphate: step 1/6. Catalyzes the NADPH-dependent rearrangement and reduction of 1-deoxy-D-xylulose-5-phosphate (DXP) to 2-C-methyl-D-erythritol 4-phosphate (MEP). This Xanthomonas campestris pv. campestris (strain B100) protein is 1-deoxy-D-xylulose 5-phosphate reductoisomerase.